The chain runs to 475 residues: Aspartyl/glutamyl-tRNA(Asn/Gln) amidotransferase subunit B (475 aa).

The protein belongs to the GatB/GatE family. GatB subfamily. Heterotrimer of A, B and C subunits.

It catalyses the reaction L-glutamyl-tRNA(Gln) + L-glutamine + ATP + H2O = L-glutaminyl-tRNA(Gln) + L-glutamate + ADP + phosphate + H(+). It carries out the reaction L-aspartyl-tRNA(Asn) + L-glutamine + ATP + H2O = L-asparaginyl-tRNA(Asn) + L-glutamate + ADP + phosphate + 2 H(+). Its function is as follows. Allows the formation of correctly charged Asn-tRNA(Asn) or Gln-tRNA(Gln) through the transamidation of misacylated Asp-tRNA(Asn) or Glu-tRNA(Gln) in organisms which lack either or both of asparaginyl-tRNA or glutaminyl-tRNA synthetases. The reaction takes place in the presence of glutamine and ATP through an activated phospho-Asp-tRNA(Asn) or phospho-Glu-tRNA(Gln). The chain is Aspartyl/glutamyl-tRNA(Asn/Gln) amidotransferase subunit B from Mycoplasma mobile (strain ATCC 43663 / 163K / NCTC 11711) (Mesomycoplasma mobile).